The primary structure comprises 506 residues: NAD(P)H-quinone oxidoreductase subunit 2, chloroplastic (506 aa).

The next 13 membrane-spanning stretches (helical) occupy residues 15 to 35 (LIPE…DLVY), 39 to 59 (CHAW…VLLG), 84 to 104 (LSLV…LLSI), 113 to 133 (APSE…LVAG), 137 to 157 (LLMM…LTGY), 172 to 192 (LLVG…MYGI), 217 to 237 (CALA…AAPF), 249 to 269 (PTPV…ILAV), 283 to 303 (WHLI…FIAV), 339 to 359 (IVYL…VILF), 382 to 402 (ALCL…AGFF), 418 to 438 (SLVW…LSVV), and 471 to 491 (VGIF…NSMV).

This sequence belongs to the complex I subunit 2 family. In terms of assembly, NDH is composed of at least 16 different subunits, 5 of which are encoded in the nucleus.

It is found in the plastid. The protein resides in the chloroplast thylakoid membrane. The catalysed reaction is a plastoquinone + NADH + (n+1) H(+)(in) = a plastoquinol + NAD(+) + n H(+)(out). It carries out the reaction a plastoquinone + NADPH + (n+1) H(+)(in) = a plastoquinol + NADP(+) + n H(+)(out). NDH shuttles electrons from NAD(P)H:plastoquinone, via FMN and iron-sulfur (Fe-S) centers, to quinones in the photosynthetic chain and possibly in a chloroplast respiratory chain. The immediate electron acceptor for the enzyme in this species is believed to be plastoquinone. Couples the redox reaction to proton translocation, and thus conserves the redox energy in a proton gradient. This is NAD(P)H-quinone oxidoreductase subunit 2, chloroplastic from Nephroselmis olivacea (Green alga).